A 56-amino-acid chain; its full sequence is Protein translocase subunit SecE (56 aa).

A helical membrane pass occupies residues 30–50 (VFWLVLFVSIFLGIVDYLMFL).

This sequence belongs to the SecE/SEC61-gamma family. Component of the Sec protein translocase complex. Heterotrimer consisting of SecY, SecE and SecG subunits. The heterotrimers can form oligomers, although 1 heterotrimer is thought to be able to translocate proteins. Interacts with the ribosome. Interacts with SecDF, and other proteins may be involved. Interacts with SecA.

The protein localises to the cell inner membrane. In terms of biological role, essential subunit of the Sec protein translocation channel SecYEG. Clamps together the 2 halves of SecY. May contact the channel plug during translocation. The polypeptide is Protein translocase subunit SecE (Borreliella burgdorferi (strain ATCC 35210 / DSM 4680 / CIP 102532 / B31) (Borrelia burgdorferi)).